Consider the following 570-residue polypeptide: Proline--tRNA ligase (570 aa).

The protein belongs to the class-II aminoacyl-tRNA synthetase family. ProS type 1 subfamily. In terms of assembly, homodimer.

The protein resides in the cytoplasm. It carries out the reaction tRNA(Pro) + L-proline + ATP = L-prolyl-tRNA(Pro) + AMP + diphosphate. Catalyzes the attachment of proline to tRNA(Pro) in a two-step reaction: proline is first activated by ATP to form Pro-AMP and then transferred to the acceptor end of tRNA(Pro). As ProRS can inadvertently accommodate and process non-cognate amino acids such as alanine and cysteine, to avoid such errors it has two additional distinct editing activities against alanine. One activity is designated as 'pretransfer' editing and involves the tRNA(Pro)-independent hydrolysis of activated Ala-AMP. The other activity is designated 'posttransfer' editing and involves deacylation of mischarged Ala-tRNA(Pro). The misacylated Cys-tRNA(Pro) is not edited by ProRS. The protein is Proline--tRNA ligase of Thermoanaerobacter sp. (strain X514).